The primary structure comprises 137 residues: Fluoride-specific ion channel FluC (137 aa).

The next 4 membrane-spanning stretches (helical) occupy residues 11–31 (IAVS…SLWF), 42–62 (GTLF…ALAL), 75–95 (LIAV…LDTF), and 107–127 (GFYW…GIIL). Na(+)-binding residues include Gly-82 and Thr-85.

It belongs to the fluoride channel Fluc/FEX (TC 1.A.43) family.

Its subcellular location is the cell inner membrane. It catalyses the reaction fluoride(in) = fluoride(out). Its activity is regulated as follows. Na(+) is not transported, but it plays an essential structural role and its presence is essential for fluoride channel function. Functionally, fluoride-specific ion channel. Important for reducing fluoride concentration in the cell, thus reducing its toxicity. The chain is Fluoride-specific ion channel FluC from Trichormus variabilis (strain ATCC 29413 / PCC 7937) (Anabaena variabilis).